A 289-amino-acid polypeptide reads, in one-letter code: Four and a half LIM domains protein 3 (289 aa).

Position 2 is an N-acetylserine (Ser-2). The C4-type zinc finger occupies 7 to 31 (CAKCNESLYGRKYIQTDSGPYCVPC). 2 LIM zinc-binding domains span residues 40–92 (CAEC…CNEC) and 101–153 (CSAC…CVPC). Lys-157 is subject to N6-acetyllysine. LIM zinc-binding domains lie at 162–212 (CARC…CVAC) and 221–275 (CSSC…FVPD). Lys-244 bears the N6-acetyllysine mark.

As to quaternary structure, interacts with SOX15; the interaction recruits FHL3 to FOXK1 promoters where it acts as a transcriptional coactivator of FOXK1. As to expression, expressed in myogenic progenitor cells (at protein level). Expressed in skeletal striated muscle and the heart. Expressed to a lesser extent, in lung, and kidney. Expressed in skin and skeletal muscles such as the masseter, tongue, tibialis anterior and plantar muscles.

It localises to the nucleus. The protein resides in the cytoplasm. Recruited by SOX15 to FOXK1 promoters where it acts as a transcriptional coactivator of FOXK1. The polypeptide is Four and a half LIM domains protein 3 (Fhl3) (Mus musculus (Mouse)).